Consider the following 445-residue polypeptide: 3-phosphoshikimate 1-carboxyvinyltransferase (445 aa).

A disordered region spans residues 1-24 (MEHAATLPQTSRRPATPLTGTITV). The span at 7 to 22 (LPQTSRRPATPLTGTI) shows a compositional bias: polar residues. Lys28, Ser29, and Arg33 together coordinate 3-phosphoshikimate. Lys28 contributes to the phosphoenolpyruvate binding site. Positions 101 and 129 each coordinate phosphoenolpyruvate. Residues Ser174, Gln176, Asp326, and Lys353 each contribute to the 3-phosphoshikimate site. Position 176 (Gln176) interacts with phosphoenolpyruvate. Asp326 (proton acceptor) is an active-site residue. Residues Arg357 and Arg399 each coordinate phosphoenolpyruvate.

Belongs to the EPSP synthase family. As to quaternary structure, monomer.

The protein resides in the cytoplasm. The enzyme catalyses 3-phosphoshikimate + phosphoenolpyruvate = 5-O-(1-carboxyvinyl)-3-phosphoshikimate + phosphate. The protein operates within metabolic intermediate biosynthesis; chorismate biosynthesis; chorismate from D-erythrose 4-phosphate and phosphoenolpyruvate: step 6/7. Catalyzes the transfer of the enolpyruvyl moiety of phosphoenolpyruvate (PEP) to the 5-hydroxyl of shikimate-3-phosphate (S3P) to produce enolpyruvyl shikimate-3-phosphate and inorganic phosphate. The sequence is that of 3-phosphoshikimate 1-carboxyvinyltransferase from Acidiphilium cryptum (strain JF-5).